We begin with the raw amino-acid sequence, 240 residues long: 26.7 kDa heat shock protein, chloroplastic (240 aa).

The transit peptide at 1–43 (MAAPFALVSRVSPAARLPIRAAWRRARPTVGLPSSGRARQLAV) directs the protein to the chloroplast. The interval 59–84 (HVNQDGGNQQGNAVQRRPRRSSALDG) is disordered. The sHSP domain occupies 126-240 (LATGEVRMPW…ERKVIDVQVQ (115 aa)).

The protein belongs to the small heat shock protein (HSP20) family. As to quaternary structure, may form oligomeric structures. In terms of tissue distribution, expressed in roots, stems, leaves, spikelets and embryos.

It is found in the plastid. It localises to the chloroplast. This is 26.7 kDa heat shock protein, chloroplastic (HSP26.7) from Oryza sativa subsp. japonica (Rice).